Here is a 403-residue protein sequence, read N- to C-terminus: tRNA methyltransferase 10 homolog C (403 aa).

The transit peptide at 1–39 (MAAFLKMSVSVNFFRPFTRFLVPFTLHRKRNNLTILQRY) directs the protein to the mitochondrion. S84 is modified (phosphoserine). Residues 138 to 169 (TKEKVKKARQIKKEMKAAAREEAKNIKLLETT) adopt a coiled-coil conformation. An SAM-dependent MTase TRM10-type domain is found at 191 to 383 (MGWKGAQAMQ…QFVPKRKHTG (193 aa)).

It belongs to the class IV-like SAM-binding methyltransferase superfamily. TRM10 family. In terms of assembly, component of mitochondrial ribonuclease P, a complex composed of TRMT10C/MRPP1, HSD17B10/MRPP2 and PRORP/MRPP3. Interacts with HSD17B10/MRPP2; forming the MRPP1-MRPP2 subcomplex of the mitochondrial ribonuclease P complex. Interacts with GRSF1.

It is found in the mitochondrion matrix. Its subcellular location is the mitochondrion nucleoid. The catalysed reaction is adenosine(9) in tRNA + S-adenosyl-L-methionine = N(1)-methyladenosine(9) in tRNA + S-adenosyl-L-homocysteine + H(+). The enzyme catalyses guanosine(9) in tRNA + S-adenosyl-L-methionine = N(1)-methylguanosine(9) in tRNA + S-adenosyl-L-homocysteine + H(+). It catalyses the reaction an adenosine in mRNA + S-adenosyl-L-methionine = an N(1)-methyladenosine in mRNA + S-adenosyl-L-homocysteine + H(+). Functionally, mitochondrial tRNA N(1)-methyltransferase involved in mitochondrial tRNA maturation. Component of mitochondrial ribonuclease P, a complex composed of TRMT10C/MRPP1, HSD17B10/MRPP2 and PRORP/MRPP3, which cleaves tRNA molecules in their 5'-ends. Together with HSD17B10/MRPP2, forms a subcomplex of the mitochondrial ribonuclease P, named MRPP1-MRPP2 subcomplex, which displays functions that are independent of the ribonuclease P activity. The MRPP1-MRPP2 subcomplex catalyzes the formation of N(1)-methylguanine and N(1)-methyladenine at position 9 (m1G9 and m1A9, respectively) in tRNAs; TRMT10C/MRPP1 acting as the catalytic N(1)-methyltransferase subunit. The MRPP1-MRPP2 subcomplex also acts as a tRNA maturation platform: following 5'-end cleavage by the mitochondrial ribonuclease P complex, the MRPP1-MRPP2 subcomplex enhances the efficiency of 3'-processing catalyzed by ELAC2, retains the tRNA product after ELAC2 processing and presents the nascent tRNA to the mitochondrial CCA tRNA nucleotidyltransferase TRNT1 enzyme. In addition to tRNA N(1)-methyltransferase activity, TRMT10C/MRPP1 also acts as a mRNA N(1)-methyltransferase by mediating methylation of adenosine residues at the N(1) position of MT-ND5 mRNA. Associates with mitochondrial DNA complexes at the nucleoids to initiate RNA processing and ribosome assembly. The protein is tRNA methyltransferase 10 homolog C of Homo sapiens (Human).